The chain runs to 241 residues: Ribonuclease HII (241 aa).

Residues 57-241 (NFIAGVDEAG…RTYVEKILKG (185 aa)) enclose the RNase H type-2 domain. A divalent metal cation-binding residues include Asp-63, Glu-64, and Asp-155.

Belongs to the RNase HII family. Mn(2+) serves as cofactor. The cofactor is Mg(2+).

It is found in the cytoplasm. The enzyme catalyses Endonucleolytic cleavage to 5'-phosphomonoester.. Functionally, endonuclease that specifically degrades the RNA of RNA-DNA hybrids. The protein is Ribonuclease HII of Caldanaerobacter subterraneus subsp. tengcongensis (strain DSM 15242 / JCM 11007 / NBRC 100824 / MB4) (Thermoanaerobacter tengcongensis).